Consider the following 62-residue polypeptide: Large ribosomal subunit protein bL28 (62 aa).

Positions 1–27 (MARECYITGRKARSGNKRSHAMNKSKR) are disordered. The segment covering 10–27 (RKARSGNKRSHAMNKSKR) has biased composition (basic residues).

Belongs to the bacterial ribosomal protein bL28 family.

This Shouchella clausii (strain KSM-K16) (Alkalihalobacillus clausii) protein is Large ribosomal subunit protein bL28.